The sequence spans 240 residues: Ubiquinone biosynthesis O-methyltransferase (240 aa).

Residues R44, G64, D85, and M129 each coordinate S-adenosyl-L-methionine.

This sequence belongs to the methyltransferase superfamily. UbiG/COQ3 family.

The catalysed reaction is a 3-demethylubiquinol + S-adenosyl-L-methionine = a ubiquinol + S-adenosyl-L-homocysteine + H(+). The enzyme catalyses a 3-(all-trans-polyprenyl)benzene-1,2-diol + S-adenosyl-L-methionine = a 2-methoxy-6-(all-trans-polyprenyl)phenol + S-adenosyl-L-homocysteine + H(+). It participates in cofactor biosynthesis; ubiquinone biosynthesis. Its function is as follows. O-methyltransferase that catalyzes the 2 O-methylation steps in the ubiquinone biosynthetic pathway. The sequence is that of Ubiquinone biosynthesis O-methyltransferase from Escherichia coli O81 (strain ED1a).